We begin with the raw amino-acid sequence, 378 residues long: Signal peptide peptidase (378 aa).

The segment at 1-27 is disordered; sequence MDSAVSDPHNGSAEAGTPANGTTRPPS. The Lumenal portion of the chain corresponds to 1–31; sequence MDSAVSDPHNGSAEAGTPANGTTRPPSTPEG. Asn-10 and Asn-20 each carry an N-linked (GlcNAc...) asparagine glycan. The chain crosses the membrane as a helical span at residues 32–52; sequence IALAYGSLLLMALLPIFFGAL. Residues 53 to 77 lie on the Cytoplasmic side of the membrane; the sequence is RSVRCARGKSSSDMPETITSRDAAR. Residues 78 to 98 traverse the membrane as a helical segment; sequence FPIIASCTLLGLYLFFKIFSQ. At 99–100 the chain is on the lumenal side; the sequence is EY. A helical transmembrane segment spans residues 101–121; the sequence is INLLLSMYFFVLGILALSHTI. The Cytoplasmic segment spans residues 122 to 157; it reads SPFMNKFFPANFPNRQYQLLFTQGSGENKEEIINYE. Residues 158-178 traverse the membrane as a helical segment; sequence FDTKDLVCLGLSSVVGVWYLL. The Lumenal segment spans residues 179 to 181; sequence RKH. A helical transmembrane segment spans residues 182-202; sequence WIANNLFGLAFSLNGVELLHL. Residues 203–209 lie on the Cytoplasmic side of the membrane; sequence NNVSTGC. Residues 210-230 traverse the membrane as a helical segment; sequence ILLGGLFIYDIFWVFGTNVMV. Asp-219 is a catalytic residue. Residues 231-256 are Lumenal-facing; sequence TVAKSFEAPIKLVFPQDLLEKGLEAD. Residues 257–277 form a helical membrane-spanning segment; it reads NFAMLGLGDIVIPGIFIALLL. Residue Asp-265 is part of the active site. At 278–290 the chain is on the cytoplasmic side; the sequence is RFDISLKKNTHTY. Residues 291–311 form a helical membrane-spanning segment; it reads FYTSFAAYIFGLGLTIFIMHI. Over 312–314 the chain is Lumenal; that stretch reads FKH. Residues 315–335 form a helical membrane-spanning segment; it reads AQPALLYLVPACIGFPVLVAL. The short motif at 317-319 is the PAL element; sequence PAL. The Cytoplasmic portion of the chain corresponds to 336 to 378; that stretch reads AKGEVAEMFSYEESNPKDPAAETESKEESTEASASKRLEKKEK. Residues 346–378 are disordered; the sequence is YEESNPKDPAAETESKEESTEASASKRLEKKEK. The span at 349–378 shows a compositional bias: basic and acidic residues; it reads SNPKDPAAETESKEESTEASASKRLEKKEK. A Phosphoserine modification is found at Ser-368.

This sequence belongs to the peptidase A22B family. Monomer. Homodimer. Interacts with RNF139. Interacts with DERL1 and XBP1 isoform 1. As to expression, widely expressed with highest levels in liver and kidney. In the brain, expressed predominantly in hippocampus, amygdala, piriform cortex, choroid plexus and arcuate nucleus of the hypothalamic area. Isoform 1 is more strongly expressed than isoform 4 in most tissues except brain and skeletal muscle where isoform 4 is the dominant isoform and in testis where isoform 1 and isoform 4 are expressed at similar levels. In the brain, isoform 4 is not detected in the choroid plexus.

It localises to the endoplasmic reticulum membrane. The protein resides in the membrane. It is found in the cell membrane. Functionally, catalyzes intramembrane proteolysis of signal peptides that have been removed from precursors of secretory and membrane proteins, resulting in the release of the fragment from the ER membrane into the cytoplasm. Required to generate lymphocyte cell surface (HLA-E) epitopes derived from MHC class I signal peptides. Involved in the intramembrane cleavage of the integral membrane protein PSEN1. Cleaves the integral membrane protein XBP1 isoform 1 in a DERL1/RNF139-dependent manner. May play a role in graft rejection. The polypeptide is Signal peptide peptidase (Mus musculus (Mouse)).